The chain runs to 362 residues: Heat-inducible transcription repressor HrcA (362 aa).

It belongs to the HrcA family.

In terms of biological role, negative regulator of class I heat shock genes (grpE-dnaK-dnaJ and groELS operons). Prevents heat-shock induction of these operons. This Bradyrhizobium diazoefficiens (strain JCM 10833 / BCRC 13528 / IAM 13628 / NBRC 14792 / USDA 110) protein is Heat-inducible transcription repressor HrcA.